Here is a 228-residue protein sequence, read N- to C-terminus: MRTWSNFNLQNSASPLMEQIIFFHDHTLIILIMITILVGYIMINLFFNKFINRFFLVGQMIELIWTVLPAITLIFIALPSLRLLYLLDELNNPLITLKTIGHQWYWSYEYSDFNNIEFDSYMIASNELPLNNFRLLDVDNRIILPMNNQIRILVTATDVIHSWTIPSLGVKVDANPGRLNQTNFFINRPGIFYGQCSEICGANHSFMPIVIESISIKNFINWINNYSY.

The Mitochondrial intermembrane portion of the chain corresponds to 1–26 (MRTWSNFNLQNSASPLMEQIIFFHDH). The helical transmembrane segment at 27–48 (TLIILIMITILVGYIMINLFFN) threads the bilayer. The Mitochondrial matrix segment spans residues 49-62 (KFINRFFLVGQMIE). The chain crosses the membrane as a helical span at residues 63-82 (LIWTVLPAITLIFIALPSLR). The Mitochondrial intermembrane portion of the chain corresponds to 83 to 228 (LLYLLDELNN…FINWINNYSY (146 aa)). Residues His-161, Cys-196, Glu-198, Cys-200, His-204, and Met-207 each contribute to the Cu cation site. Mg(2+) is bound at residue Glu-198.

Belongs to the cytochrome c oxidase subunit 2 family. As to quaternary structure, component of the cytochrome c oxidase (complex IV, CIV), a multisubunit enzyme composed of a catalytic core of 3 subunits and several supernumerary subunits. The complex exists as a monomer or a dimer and forms supercomplexes (SCs) in the inner mitochondrial membrane with ubiquinol-cytochrome c oxidoreductase (cytochrome b-c1 complex, complex III, CIII). Cu cation serves as cofactor.

The protein localises to the mitochondrion inner membrane. The enzyme catalyses 4 Fe(II)-[cytochrome c] + O2 + 8 H(+)(in) = 4 Fe(III)-[cytochrome c] + 2 H2O + 4 H(+)(out). In terms of biological role, component of the cytochrome c oxidase, the last enzyme in the mitochondrial electron transport chain which drives oxidative phosphorylation. The respiratory chain contains 3 multisubunit complexes succinate dehydrogenase (complex II, CII), ubiquinol-cytochrome c oxidoreductase (cytochrome b-c1 complex, complex III, CIII) and cytochrome c oxidase (complex IV, CIV), that cooperate to transfer electrons derived from NADH and succinate to molecular oxygen, creating an electrochemical gradient over the inner membrane that drives transmembrane transport and the ATP synthase. Cytochrome c oxidase is the component of the respiratory chain that catalyzes the reduction of oxygen to water. Electrons originating from reduced cytochrome c in the intermembrane space (IMS) are transferred via the dinuclear copper A center (CU(A)) of subunit 2 and heme A of subunit 1 to the active site in subunit 1, a binuclear center (BNC) formed by heme A3 and copper B (CU(B)). The BNC reduces molecular oxygen to 2 water molecules using 4 electrons from cytochrome c in the IMS and 4 protons from the mitochondrial matrix. This chain is Cytochrome c oxidase subunit 2 (COII), found in Galleria mellonella (Greater wax moth).